We begin with the raw amino-acid sequence, 696 residues long: MKFAEHLSAHITPEWRKQYIQYEAFKDMLYSAQDQAPSVEVTDEDTVKRYFAKFEEKFFQTCEKELAKINTFYSEKLAEAQRRFATLQNELQSSLDAQRESIGVTTLRQRRKPVFHLSHEERVQHRNIKDLKLAFSEFYLSLILLQNYQNLNFTGFRKILKKHDKILETSRGADWRVGHVEVAPFYTCKKINQLISETEAVVTNELEDGDRQKAMKRLRVPPLGAAQPAPAWTTFRVGLFCGIFIVLNITLVLAAVFKLETDRTVWPLIRIYRGGFLLIEFLFLLGINTYGWRQAGVNHVLIFELNPRNNLSHQHLFEIAGFLGILWCLSLLACFFAPISVVPIYVYPLALYGFMVFFLINPTKTFYYKSRFWLLKLLFRVFTAPFHKVGFADFWLADQLNSLSVILMDLEYMICFYSFELKWDENKSLLPNDLQEPEFCHRYTYGVRAIVQCIPAWLRFIQCLRRYRDTKRAFPHLVNAGKYSTTFFTVTFAALYSTHKERQHSDTMVFLYLWVVFCAISSCYTLIWDLKMDWGLFDKNAGENTFLREEIVYPQKAYYYCAIIEDVILRFAWTIQISITATAFQPHVGDIIATVFAPLEVFRRFVWNFFRLENEHLNNCGEFRAVRDISVAPLNADDQTLLEQMMDQEDGVRNRQKNRSWKYNQSISLRRPRLASQSKARDTKVLIEDTDDEANT.

The Cytoplasmic portion of the chain corresponds to 1-228 (MKFAEHLSAH…RVPPLGAAQP (228 aa)). Positions 2–224 (KFAEHLSAHI…MKRLRVPPLG (223 aa)) constitute an SPX domain. Residues 158-165 (KILKKHDK) are important for inositol polyphosphate binding. A helical membrane pass occupies residues 229–259 (APAWTTFRVGLFCGIFIVLNITLVLAAVFKL). Residues 260–264 (ETDRT) are Extracellular-facing. Residues 265 to 296 (VWPLIRIYRGGFLLIEFLFLLGINTYGWRQAG) traverse the membrane as a helical segment. Residues 297–309 (VNHVLIFELNPRN) are Cytoplasmic-facing. A helical transmembrane segment spans residues 310-337 (NLSHQHLFEIAGFLGILWCLSLLACFFA). The Extracellular segment spans residues 338–343 (PISVVP). The chain crosses the membrane as a helical span at residues 344–365 (IYVYPLALYGFMVFFLINPTKT). The helical intramembrane region spans 366-383 (FYYKSRFWLLKLLFRVFT). The Cytoplasmic segment spans residues 384-388 (APFHK). The discontinuously helical transmembrane segment at 389-422 (VGFADFWLADQLNSLSVILMDLEYMICFYSFELK) threads the bilayer. Residues aspartate 398 and asparagine 401 each coordinate phosphate. Residues 423–429 (WDENKSL) lie on the Extracellular side of the membrane. A discontinuously helical transmembrane segment spans residues 430–471 (LPNDLQEPEFCHRYTYGVRAIVQCIPAWLRFIQCLRRYRDTK). Residues 439 to 643 (FCHRYTYGVR…LNADDQTLLE (205 aa)) enclose the EXS domain. Residue arginine 472 is a topological domain, cytoplasmic. A helical transmembrane segment spans residues 473 to 503 (AFPHLVNAGKYSTTFFTVTFAALYSTHKERQ). Positions 482 and 483 each coordinate phosphate. The Extracellular portion of the chain corresponds to 504 to 506 (HSD). The helical transmembrane segment at 507 to 534 (TMVFLYLWVVFCAISSCYTLIWDLKMDW) threads the bilayer. Residues 535–553 (GLFDKNAGENTFLREEIVY) are Cytoplasmic-facing. A discontinuously helical transmembrane segment spans residues 554 to 585 (PQKAYYYCAIIEDVILRFAWTIQISITATAFQ). A phosphate-binding site is contributed by arginine 570. The Extracellular segment spans residues 586 to 587 (PH). A helical transmembrane segment spans residues 588-626 (VGDIIATVFAPLEVFRRFVWNFFRLENEHLNNCGEFRAV). Phosphate is bound by residues arginine 603 and arginine 604. At 627-696 (RDISVAPLNA…IEDTDDEANT (70 aa)) the chain is on the cytoplasmic side. The residue at position 668 (serine 668) is a Phosphoserine. Residues 672–696 (PRLASQSKARDTKVLIEDTDDEANT) form a disordered region. A Phosphothreonine modification is found at threonine 690.

The protein belongs to the SYG1 (TC 2.A.94) family. In terms of assembly, homodimer.

Its subcellular location is the cell membrane. The catalysed reaction is phosphate(in) = phosphate(out). Inorganic ion transporter that mediates phosphate ion export across plasma membrane. Plays a major role in phosphate homeostasis, preventing intracellular phosphate accumulation and possible calcium phosphate precipitation, ultimately preserving calcium signaling. Binds inositol hexakisphosphate (Ins6P) and similar inositol polyphosphates, such as 5-diphospho-inositol pentakisphosphate (5-InsP7), which are important intracellular signaling molecules involved in regulation of phosphate flux. This Cricetulus griseus (Chinese hamster) protein is Solute carrier family 53 member 1 (XPR1).